The chain runs to 84 residues: U21-theraphotoxin-Cg1a 2 (84 aa).

A signal peptide spans 1 to 21; it reads MKVSVLITLAVLGVMFLFTSA. Residues 22–47 constitute a propeptide that is removed on maturation; sequence EERGSDQMDSPAWLKSMEIIFQSEER. Cystine bridges form between Cys-49/Cys-63, Cys-56/Cys-68, and Cys-62/Cys-76. Val-82 bears the Valine amide mark.

It belongs to the neurotoxin 10 (Hwtx-1) family. 05 (F4a) subfamily. As to expression, expressed by the venom gland.

The protein resides in the secreted. Functionally, probable ion channel inhibitor. This Chilobrachys guangxiensis (Chinese earth tiger tarantula) protein is U21-theraphotoxin-Cg1a 2.